A 356-amino-acid chain; its full sequence is 5-formaminoimidazole-4-carboxamide-1-(beta)-D-ribofuranosyl 5'-monophosphate synthetase (356 aa).

Residues His-27 and Ser-94 each contribute to the 5-amino-1-(5-phospho-beta-D-ribosyl)imidazole-4-carboxamide site. The 218-residue stretch at 116 to 333 (RCLAWESDRE…YSDLIEKGLS (218 aa)) folds into the ATP-grasp domain. Residues 145-196 (AELI…TRYY) and Glu-226 contribute to the ATP site. Position 255 (Asn-255) interacts with 5-amino-1-(5-phospho-beta-D-ribosyl)imidazole-4-carboxamide. Mg(2+)-binding residues include Glu-293 and Glu-306.

This sequence belongs to the phosphohexose mutase family. Mg(2+) serves as cofactor. The cofactor is Mn(2+).

It carries out the reaction 5-amino-1-(5-phospho-beta-D-ribosyl)imidazole-4-carboxamide + formate + ATP = 5-formamido-1-(5-phospho-D-ribosyl)imidazole-4-carboxamide + ADP + phosphate. It participates in purine metabolism; IMP biosynthesis via de novo pathway; 5-formamido-1-(5-phospho-D-ribosyl)imidazole-4-carboxamide from 5-amino-1-(5-phospho-D-ribosyl)imidazole-4-carboxamide (formate route): step 1/1. Catalyzes the ATP- and formate-dependent formylation of 5-aminoimidazole-4-carboxamide-1-beta-d-ribofuranosyl 5'-monophosphate (AICAR) to 5-formaminoimidazole-4-carboxamide-1-beta-d-ribofuranosyl 5'-monophosphate (FAICAR) in the absence of folates. In Methanothrix thermoacetophila (strain DSM 6194 / JCM 14653 / NBRC 101360 / PT) (Methanosaeta thermophila), this protein is 5-formaminoimidazole-4-carboxamide-1-(beta)-D-ribofuranosyl 5'-monophosphate synthetase.